The primary structure comprises 124 residues: Large ribosomal subunit protein bL17 (124 aa).

The protein belongs to the bacterial ribosomal protein bL17 family. As to quaternary structure, part of the 50S ribosomal subunit. Contacts protein L32.

The sequence is that of Large ribosomal subunit protein bL17 from Acidithiobacillus ferrooxidans (strain ATCC 23270 / DSM 14882 / CIP 104768 / NCIMB 8455) (Ferrobacillus ferrooxidans (strain ATCC 23270)).